The sequence spans 309 residues: Lipoyl synthase (309 aa).

Residues Cys37, Cys42, Cys48, Cys67, Cys71, Cys74, and Ser281 each coordinate [4Fe-4S] cluster. Positions 53–270 (DGPGTATFML…RVAETEFGFL (218 aa)) constitute a Radical SAM core domain.

This sequence belongs to the radical SAM superfamily. Lipoyl synthase family. The cofactor is [4Fe-4S] cluster.

It localises to the cytoplasm. The enzyme catalyses [[Fe-S] cluster scaffold protein carrying a second [4Fe-4S](2+) cluster] + N(6)-octanoyl-L-lysyl-[protein] + 2 oxidized [2Fe-2S]-[ferredoxin] + 2 S-adenosyl-L-methionine + 4 H(+) = [[Fe-S] cluster scaffold protein] + N(6)-[(R)-dihydrolipoyl]-L-lysyl-[protein] + 4 Fe(3+) + 2 hydrogen sulfide + 2 5'-deoxyadenosine + 2 L-methionine + 2 reduced [2Fe-2S]-[ferredoxin]. The protein operates within protein modification; protein lipoylation via endogenous pathway; protein N(6)-(lipoyl)lysine from octanoyl-[acyl-carrier-protein]: step 2/2. Its function is as follows. Catalyzes the radical-mediated insertion of two sulfur atoms into the C-6 and C-8 positions of the octanoyl moiety bound to the lipoyl domains of lipoate-dependent enzymes, thereby converting the octanoylated domains into lipoylated derivatives. In Natronomonas pharaonis (strain ATCC 35678 / DSM 2160 / CIP 103997 / JCM 8858 / NBRC 14720 / NCIMB 2260 / Gabara) (Halobacterium pharaonis), this protein is Lipoyl synthase.